The primary structure comprises 437 residues: Adenylosuccinate synthetase (437 aa).

Residues 25–31 (GDEGKGK), 53–55 (GHT), and Lys-62 each bind GTP. The active-site Proton acceptor is Asp-26. Mg(2+) contacts are provided by Asp-26 and Gly-53. IMP-binding positions include 26 to 29 (DEGK) and 51 to 54 (NAGH). His-54 (proton donor) is an active-site residue. 4 residues coordinate IMP: Thr-141, Arg-155, Asn-232, and Thr-247. Residue Thr-307 participates in GTP binding. Residue 307-313 (TTTKRPR) coordinates substrate. Arg-311 contributes to the IMP binding site. GTP-binding positions include Arg-313, 339 to 341 (KLD), and 425 to 427 (GVG).

This sequence belongs to the adenylosuccinate synthetase family. In terms of assembly, homodimer. Mg(2+) serves as cofactor.

It is found in the cytoplasm. It carries out the reaction IMP + L-aspartate + GTP = N(6)-(1,2-dicarboxyethyl)-AMP + GDP + phosphate + 2 H(+). Its pathway is purine metabolism; AMP biosynthesis via de novo pathway; AMP from IMP: step 1/2. Functionally, plays an important role in the salvage pathway for purine nucleotide biosynthesis. Catalyzes the first committed step in the biosynthesis of AMP from IMP. The polypeptide is Adenylosuccinate synthetase (Plasmodium knowlesi (strain H)).